The following is a 2067-amino-acid chain: Separin (2067 aa).

Disordered stretches follow at residues 51–91, 140–167, 1316–1363, and 1449–1478; these read RTAR…AQDV, KKDA…TDNE, DLEE…SVEA, and LEPK…TKAQ. Positions 55–86 are enriched in low complexity; sequence GTKATATNATASSRAKTTRTKSTSTSTTRTKT. 2 stretches are compositionally biased toward low complexity: residues 1333-1354 and 1449-1461; these read TRQP…ARST and LEPK…SSKS. The Peptidase C50 domain maps to 1880–1975; it reads RRNGTYILNP…SGTLTEAGEY (96 aa). Residue Cys1964 is part of the active site.

The protein resides in the nucleus. The catalysed reaction is All bonds known to be hydrolyzed by this endopeptidase have arginine in P1 and an acidic residue in P4. P6 is often occupied by an acidic residue or by a hydroxy-amino-acid residue, the phosphorylation of which enhances cleavage.. Functionally, required for nuclear division. Could function in the mitotic spindle. The protein is Separin (bimB) of Emericella nidulans (strain FGSC A4 / ATCC 38163 / CBS 112.46 / NRRL 194 / M139) (Aspergillus nidulans).